Reading from the N-terminus, the 853-residue chain is DNA mismatch repair protein MutS (853 aa).

614–621 (GPNMGGKS) provides a ligand contact to ATP.

This sequence belongs to the DNA mismatch repair MutS family.

Its function is as follows. This protein is involved in the repair of mismatches in DNA. It is possible that it carries out the mismatch recognition step. This protein has a weak ATPase activity. The polypeptide is DNA mismatch repair protein MutS (Escherichia coli O81 (strain ED1a)).